Consider the following 389-residue polypeptide: Type II methyltransferase M1.ScrFI (389 aa).

Positions 16–71 constitute an HTH cro/C1-type domain; it reads IKEKRLRLNMTQKELADAVGMSKNGDRTIRRWENGETCPSQLEISAILRFPEIAPF. The SAM-dependent MTase C5-type domain occupies 79–387; it reads YKMIDLFAGI…EKMLEVLEKS (309 aa). C149 is an active-site residue.

This sequence belongs to the class I-like SAM-binding methyltransferase superfamily. C5-methyltransferase family.

The catalysed reaction is a 2'-deoxycytidine in DNA + S-adenosyl-L-methionine = a 5-methyl-2'-deoxycytidine in DNA + S-adenosyl-L-homocysteine + H(+). Functionally, a methylase, recognizes the double-stranded sequence 5'-CCNGG-3', methylates C-2 on both strands, and protects the DNA from cleavage by the ScrFI endonuclease. In Lactococcus lactis subsp. cremoris (Streptococcus cremoris), this protein is Type II methyltransferase M1.ScrFI (scrFIAM).